The chain runs to 161 residues: Nucleotide-binding protein Sama_2557 (161 aa).

This sequence belongs to the YajQ family.

Nucleotide-binding protein. This is Nucleotide-binding protein Sama_2557 from Shewanella amazonensis (strain ATCC BAA-1098 / SB2B).